An 876-amino-acid polypeptide reads, in one-letter code: MGDSDDEYDRRRRDKFRRERSDYDRSRERDERRRGDDWNDREWDRGRERRSRGEYRDYDRNRRERFSPPRHELSPPQKRMRRDWDEHSSDPYHSGYEMPYAGGGGGPTYGPPQPWGHPDVHIMQHHVLPIQARLGSIAEIDLGVPPPVMKTFKEFLLSLDDSVDETEAVKRYNDYKLDFRRQQMQDFFLAHKDEEWFRSKYHPDEVGKRRQEARGALQNRLRVFLSLMETGWFDNLLLDIDKADAIVKMLDAAVIKMEGGTENDLRILEQEEEEEQAGKPGEPSKKEEGRAGAGLGDGERKTNDKDEKKEDGKQAENDSSNDDKTKKSEGDGDKEEKKEDSEKEAKKSSKKRNRKHSGDDSFDEGSVSESESESESGQAEEEKEEAEEALKEKEKPKEEEWEKPKDAAGLECKPRPLHKTCSLFMRNIAPNISRAEIISLCKRYPGFMRVALSEPQPERRFFRRGWVTFDRSVNIKEICWNLQNIRLRECELSPGVNRDLTRRVRNINGITQHKQIVRNDIKLAAKLIHTLDDRTQLWASEPGTPPLPTSLPSQNPILKNITDYLIEEVSAEEEELLGSSGGAPPEEPPKEGNPAEINVERDEKLIKVLDKLLLYLRIVHSLDYYNTCEYPNEDEMPNRCGIIHVRGPMPPNRISHGEVLEWQKTFEEKLTPLLSVRESLSEEEAQKMGRKDPEQEVEKFVTSNTQELGKDKWLCPLSGKKFKGPEFVRKHIFNKHAEKIEEVKKEVAFFNNFLTDAKRPALPEIKPAQPPGPAQILPPGLTPGLPYPHQTPQGLMPYGQPRPPILGYGAGAVRPAVPTGGPPYPHAPYGAGRGNYDAFRGQGGYPGKPRNRMVRGDPRAIVEYRDLDAPDDVDFF.

The tract at residues 1 to 90 (MGDSDDEYDR…RRDWDEHSSD (90 aa)) is disordered. Gly-2 bears the N-acetylglycine mark. Ser-4 is modified (phosphoserine). At Tyr-8 the chain carries Phosphotyrosine. The span at 8-73 (YDRRRRDKFR…ERFSPPRHEL (66 aa)) shows a compositional bias: basic and acidic residues. Ser-67, Ser-74, and Ser-136 each carry phosphoserine. Residue Lys-150 forms a Glycyl lysine isopeptide (Lys-Gly) (interchain with G-Cter in SUMO2) linkage. The tract at residues 271-412 (EEEEEQAGKP…KPKDAAGLEC (142 aa)) is disordered. Positions 297–347 (DGERKTNDKDEKKEDGKQAENDSSNDDKTKKSEGDGDKEEKKEDSEKEAKK) are enriched in basic and acidic residues. The span at 370-387 (SESESESGQAEEEKEEAE) shows a compositional bias: acidic residues. The segment covering 388-412 (EALKEKEKPKEEEWEKPKDAAGLEC) has biased composition (basic and acidic residues). Residues Ser-493 and Ser-540 each carry the phosphoserine modification. The residue at position 544 (Thr-544) is a Phosphothreonine. Ser-570 carries the phosphoserine modification. Positions 575-598 (ELLGSSGGAPPEEPPKEGNPAEIN) are disordered. At Thr-671 the chain carries Phosphothreonine. Ser-679 carries the post-translational modification Phosphoserine. 3 positions are modified to omega-N-methylarginine: Arg-833, Arg-840, and Arg-850. The tract at residues 835-854 (NYDAFRGQGGYPGKPRNRMV) is disordered.

This sequence belongs to the ARS2 family. As to quaternary structure, interacts with NCBP1 and DROSHA. Interacts with CASP8AP2 and ERBB4. Interacts with LUZP4. Interacts with NCBP2/CBP20 and NCBP3. Interacts with MTREX. Ubiquitously expressed.

The protein localises to the nucleus. It is found in the nucleoplasm. The protein resides in the cytoplasm. Functionally, acts as a mediator between the cap-binding complex (CBC) and the primary microRNAs (miRNAs) processing machinery during cell proliferation. Contributes to the stability and delivery of capped primary miRNA transcripts to the primary miRNA processing complex containing DGCR8 and DROSHA, thereby playing a role in RNA-mediated gene silencing (RNAi) by miRNAs. Binds capped RNAs (m7GpppG-capped RNA); however interaction is probably mediated via its interaction with NCBP1/CBP80 component of the CBC complex. Involved in cell cycle progression at S phase. Does not directly confer arsenite resistance but rather modulates arsenic sensitivity. Independently of its activity on miRNAs, necessary and sufficient to promote neural stem cell self-renewal. Does so by directly binding SOX2 promoter and positively regulating its transcription. The polypeptide is Serrate RNA effector molecule homolog (SRRT) (Homo sapiens (Human)).